The following is a 101-amino-acid chain: Small ribosomal subunit protein uS14 (101 aa).

The protein belongs to the universal ribosomal protein uS14 family. In terms of assembly, part of the 30S ribosomal subunit. Contacts proteins S3 and S10.

In terms of biological role, binds 16S rRNA, required for the assembly of 30S particles and may also be responsible for determining the conformation of the 16S rRNA at the A site. This Acinetobacter baylyi (strain ATCC 33305 / BD413 / ADP1) protein is Small ribosomal subunit protein uS14.